The following is a 259-amino-acid chain: UPF0246 protein PBPRA0561 (259 aa).

This sequence belongs to the UPF0246 family.

This chain is UPF0246 protein PBPRA0561, found in Photobacterium profundum (strain SS9).